We begin with the raw amino-acid sequence, 1871 residues long: Callose synthase 4 (1871 aa).

The Cytoplasmic segment spans residues 1 to 491; the sequence is MNQPNRGQIL…FWHLFRSFDR (491 aa). Residues 492–512 traverse the membrane as a helical segment; it reads MWSFYILSLQAMIIIAWNETS. Residues 513–521 are Extracellular-facing; the sequence is ESGGAVFHK. The chain crosses the membrane as a helical span at residues 522-542; the sequence is VLSVFITAAKLNLFQAFLDIA. Residues 543 to 558 lie on the Cytoplasmic side of the membrane; that stretch reads LSWKARHSMSTHVRQR. A helical membrane pass occupies residues 559–579; sequence YIFKAVAAAVWVLLMPLTYAY. The Extracellular portion of the chain corresponds to 580–583; the sequence is SHTS. Residues 584 to 604 form a helical membrane-spanning segment; sequence IFIVAILIYLSPNMLPEMLLL. At 605–640 the chain is on the cytoplasmic side; the sequence is IPSIRRTLEKSDFRPVKLIMWWSQPELYIGRGMHES. A helical transmembrane segment spans residues 641-661; the sequence is AWSIYKYMMFWIVLLTSKLAF. At 662-701 the chain is on the extracellular side; it reads SYYVEQIKPLMGPTKEIMSVPMPGYWLPEFFPHVKNNRGV. Residues 702–724 form a helical membrane-spanning segment; it reads VITLWSPVILVYFMDTQIWYAIV. Topologically, residues 725–1441 are cytoplasmic; sequence STLVGGLYGA…FDFFRMLSCY (717 aa). The chain crosses the membrane as a helical span at residues 1442–1462; sequence FTTVGFYFCSMLTVLTVYVFL. At 1463-1485 the chain is on the extracellular side; it reads YGRLYLVLSGVEKELGNKPMMME. Residues 1486 to 1506 traverse the membrane as a helical segment; the sequence is IILASQSFVQIVFLMAMPMIM. The Cytoplasmic portion of the chain corresponds to 1507 to 1516; that stretch reads EIGLERGFYD. A helical transmembrane segment spans residues 1517–1537; that stretch reads ALFDFVLMQLQLASVFFTFQL. The Extracellular portion of the chain corresponds to 1538 to 1580; sequence GTKFHYYCKTLLHGGAEYRGTGRGFVVFHAKFAENYRFYSRSH. The next 2 membrane-spanning stretches (helical) occupy residues 1581-1601 and 1602-1622; these read FVKA…GPTY and IGLF…APFL. Topologically, residues 1623–1675 are extracellular; sequence FNPSGFEWHEIVEDWADWKKWIEYDNGGIGVPPEKSWESWWEKDIEHLQHSGK. The chain crosses the membrane as a helical span at residues 1676-1696; sequence WGIVVEIFFALRFFIFQYGLV. The Cytoplasmic portion of the chain corresponds to 1697-1708; it reads YQLSAFKNKYSS. The helical transmembrane segment at 1709-1729 threads the bilayer; that stretch reads LWVFGASWLLILILLLTVTVL. Residues 1730 to 1741 lie on the Extracellular side of the membrane; that stretch reads DYARRRLGTEFQ. The chain crosses the membrane as a helical span at residues 1742 to 1762; sequence LLFRIIKVSLFLAFMAIFITL. At 1763–1772 the chain is on the cytoplasmic side; sequence MTCRLILPQD. A helical transmembrane segment spans residues 1773-1793; it reads VFLCMLALIPTGWGLLLIAQS. Residues 1794–1815 are Extracellular-facing; it reads CKPLIQQPGIWSWVMTLAWVYD. The helical transmembrane segment at 1816–1836 threads the bilayer; the sequence is LVMGSLLFIPIAFMAWFPFIS. Over 1837 to 1871 the chain is Cytoplasmic; it reads EFQTRMLFNQAFSRGLHISRILSGQRKHRSSKNKD.

It belongs to the glycosyltransferase 48 family.

It localises to the cell membrane. It carries out the reaction [(1-&gt;3)-beta-D-glucosyl](n) + UDP-alpha-D-glucose = [(1-&gt;3)-beta-D-glucosyl](n+1) + UDP + H(+). Its function is as follows. Involved in callose synthesis at the forming cell plate during cytokinesis. During plant growth and development, callose is found as a transitory component of the cell plate in dividing cells, is a major component of pollen mother cell walls and pollen tubes, and is found as a structural component of plasmodesmatal canals. The polypeptide is Callose synthase 4 (CALS4) (Arabidopsis thaliana (Mouse-ear cress)).